A 196-amino-acid chain; its full sequence is MKFAVFASLLASRAAFAPAQQSARTSVATNMAFENEIGAQQPLGYWDPLGLVADGNQEKFDRLRYVEIKHGRICMLAVAGYLTQEAGIRLPGDIDYSGTSFESIPNGFAALSAVPGAGIAQIIAFIGFFEIAVMKDITGGEFVGDFRNNYLDFGWDTFSEDKKLQKRAIELNQGRAAQMGILALMVHEQLGVSILP.

The N-terminal 31 residues, 1-31 (MKFAVFASLLASRAAFAPAQQSARTSVATNM), are a transit peptide targeting the chloroplast. 3 helical membrane passes run 73 to 94 (ICMLAVAGYLTQEAGIRLPGDI), 114 to 134 (VPGAGIAQIIAFIGFFEIAVM), and 174 to 196 (GRAAQMGILALMVHEQLGVSILP).

It belongs to the fucoxanthin chlorophyll protein family. As to quaternary structure, the LHC complex of chromophytic algae is composed of fucoxanthin, chlorophyll A and C bound non-covalently by fucoxanthin chlorophyll proteins (FCPs). The ratio of the pigments in LHC; fucoxanthin: chlorophyll C: chlorophyll A; (0.6-1): (0.1-0.3): (1).

The protein localises to the plastid. Its subcellular location is the chloroplast thylakoid membrane. The light-harvesting complex (LHC) functions as a light receptor, it captures and delivers excitation energy to photosystems with which it is closely associated. Energy is transferred from the carotenoid and chlorophyll C (or B) to chlorophyll A and the photosynthetic reaction centers where it is used to synthesize ATP and reducing power. This Phaeodactylum tricornutum (Diatom) protein is Fucoxanthin-chlorophyll a-c binding protein A, chloroplastic (FCPA).